Consider the following 339-residue polypeptide: Ubiquitin carboxyl-terminal hydrolase 50 (339 aa).

The region spanning 44–339 (TGLWNLGNTC…AFCKNSVTQA (296 aa)) is the USP domain. The active-site Nucleophile is the cysteine 53. The active-site Proton acceptor is histidine 327.

It belongs to the peptidase C19 family. Weakly expressed in a few tissues.

It localises to the cytoplasm. The protein localises to the cytoskeleton. Its subcellular location is the microtubule organizing center. It is found in the centrosome. The protein resides in the nucleus. The enzyme catalyses Thiol-dependent hydrolysis of ester, thioester, amide, peptide and isopeptide bonds formed by the C-terminal Gly of ubiquitin (a 76-residue protein attached to proteins as an intracellular targeting signal).. Functionally, deubiquitinating enzyme that removes conjugated ubiquitin from specific proteins to regulate different cellular processes. Regulates the inflammasome signaling pathway by deubiquitinating 'Lys-63'-linked polyubiquitination of the PYCARD/ASC adapter protein. Regulates the ubiquitination and stability of the ACE2 protein. Acts as a negative regulator of the G2/M checkpoint pathway, by preventing serine/threonine kinase WEE1 degradation, thereby repressing entry into mitosis following activation of the G2/M DNA damage checkpoint. The protein is Ubiquitin carboxyl-terminal hydrolase 50 of Homo sapiens (Human).